The sequence spans 504 residues: Arabinose import ATP-binding protein AraG (504 aa).

ABC transporter domains lie at 8-243 and 256-499; these read LSFR…MVGR and YGEE…MPKV. Residue 40 to 47 participates in ATP binding; the sequence is GENGAGKS.

The protein belongs to the ABC transporter superfamily. Arabinose importer (TC 3.A.1.2.2) family. The complex is composed of two ATP-binding proteins (AraG), two transmembrane proteins (AraH) and a solute-binding protein (AraF).

The protein resides in the cell inner membrane. The catalysed reaction is L-arabinose(out) + ATP + H2O = L-arabinose(in) + ADP + phosphate + H(+). In terms of biological role, part of the ABC transporter complex AraFGH involved in arabinose import. Responsible for energy coupling to the transport system. The sequence is that of Arabinose import ATP-binding protein AraG from Shigella dysenteriae serotype 1 (strain Sd197).